The sequence spans 260 residues: Beta-lactamase SHV-6 (260 aa).

A signal peptide spans 1-11 (LLATLPLAVHA). Ser-56 (acyl-ester intermediate) is an active-site residue. A disulfide bond links Cys-63 and Cys-109. Glu-154 serves as the catalytic Proton acceptor. 220-222 (KTG) contributes to the substrate binding site.

This sequence belongs to the class-A beta-lactamase family.

The catalysed reaction is a beta-lactam + H2O = a substituted beta-amino acid. Its function is as follows. SHV enzymes hydrolyze broad spectrum cephalosporins notably cefotaxime and ceftazidime. This is Beta-lactamase SHV-6 (bla) from Klebsiella pneumoniae.